Here is a 603-residue protein sequence, read N- to C-terminus: UvrABC system protein C (603 aa).

The region spanning 15–92 (DKPGCYLMKN…IQKHQPYFNI (78 aa)) is the GIY-YIG domain. The UVR domain maps to 197 to 232 (ATVKRQLTKKMQRAAENMEFERAAEIRDQLHYIEVT).

This sequence belongs to the UvrC family. Interacts with UvrB in an incision complex.

The protein resides in the cytoplasm. In terms of biological role, the UvrABC repair system catalyzes the recognition and processing of DNA lesions. UvrC both incises the 5' and 3' sides of the lesion. The N-terminal half is responsible for the 3' incision and the C-terminal half is responsible for the 5' incision. This is UvrABC system protein C from Limosilactobacillus reuteri (strain DSM 20016) (Lactobacillus reuteri).